The sequence spans 319 residues: Putative antiporter CaxA (319 aa).

Helical transmembrane passes span 3 to 23, 38 to 58, 81 to 101, 105 to 125, 127 to 147, 175 to 195, 208 to 228, 250 to 270, 275 to 292, and 297 to 317; these read VATI…DRFV, MIIG…MVSA, ILLV…SMTI, FPLL…QSLT, AEGA…VYWG, VWLV…VHGA, LIGL…ASLI, ILAV…AAAA, YVMM…LRLG, and INRV…YLLF.

This sequence belongs to the Ca(2+):cation antiporter (CaCA) (TC 2.A.19) family.

The protein resides in the cell membrane. Its function is as follows. Confers modest Ca(2+) and Na(+) resistance. This Alkalimonas amylolytica protein is Putative antiporter CaxA (caxA).